The chain runs to 481 residues: ATP synthase subunit beta, chloroplastic (481 aa).

163-170 (GGAGVGKT) contributes to the ATP binding site.

This sequence belongs to the ATPase alpha/beta chains family. As to quaternary structure, F-type ATPases have 2 components, CF(1) - the catalytic core - and CF(0) - the membrane proton channel. CF(1) has five subunits: alpha(3), beta(3), gamma(1), delta(1), epsilon(1). CF(0) has four main subunits: a(1), b(1), b'(1) and c(9-12).

The protein resides in the plastid. It localises to the chloroplast thylakoid membrane. It catalyses the reaction ATP + H2O + 4 H(+)(in) = ADP + phosphate + 5 H(+)(out). In terms of biological role, produces ATP from ADP in the presence of a proton gradient across the membrane. The catalytic sites are hosted primarily by the beta subunits. The sequence is that of ATP synthase subunit beta, chloroplastic from Tupiella akineta (Green alga).